The sequence spans 581 residues: 2-succinyl-5-enolpyruvyl-6-hydroxy-3-cyclohexene-1-carboxylate synthase (581 aa).

The protein belongs to the TPP enzyme family. MenD subfamily. As to quaternary structure, homodimer. Mg(2+) serves as cofactor. It depends on Mn(2+) as a cofactor. Requires thiamine diphosphate as cofactor.

It catalyses the reaction isochorismate + 2-oxoglutarate + H(+) = 5-enolpyruvoyl-6-hydroxy-2-succinyl-cyclohex-3-ene-1-carboxylate + CO2. It functions in the pathway quinol/quinone metabolism; 1,4-dihydroxy-2-naphthoate biosynthesis; 1,4-dihydroxy-2-naphthoate from chorismate: step 2/7. The protein operates within quinol/quinone metabolism; menaquinone biosynthesis. Catalyzes the thiamine diphosphate-dependent decarboxylation of 2-oxoglutarate and the subsequent addition of the resulting succinic semialdehyde-thiamine pyrophosphate anion to isochorismate to yield 2-succinyl-5-enolpyruvyl-6-hydroxy-3-cyclohexene-1-carboxylate (SEPHCHC). This chain is 2-succinyl-5-enolpyruvyl-6-hydroxy-3-cyclohexene-1-carboxylate synthase, found in Chlorobium phaeobacteroides (strain BS1).